Reading from the N-terminus, the 333-residue chain is Holliday junction branch migration complex subunit RuvB (333 aa).

Positions 1 to 182 (MEERMVSAEA…FGVMARLEYY (182 aa)) are large ATPase domain (RuvB-L). ATP-binding positions include Ile-21, Arg-22, Gly-63, Lys-66, Thr-67, Thr-68, 129-131 (EDY), Arg-172, Tyr-182, and Arg-219. Thr-67 is a binding site for Mg(2+). The interval 183-253 (NVEELTTIIE…RAIESLERLQ (71 aa)) is small ATPAse domain (RuvB-S). The interval 256-333 (RLGLDHIDHK…EHFNMEVPNK (78 aa)) is head domain (RuvB-H). DNA contacts are provided by Arg-311 and Arg-316.

Belongs to the RuvB family. As to quaternary structure, homohexamer. Forms an RuvA(8)-RuvB(12)-Holliday junction (HJ) complex. HJ DNA is sandwiched between 2 RuvA tetramers; dsDNA enters through RuvA and exits via RuvB. An RuvB hexamer assembles on each DNA strand where it exits the tetramer. Each RuvB hexamer is contacted by two RuvA subunits (via domain III) on 2 adjacent RuvB subunits; this complex drives branch migration. In the full resolvosome a probable DNA-RuvA(4)-RuvB(12)-RuvC(2) complex forms which resolves the HJ.

It localises to the cytoplasm. It carries out the reaction ATP + H2O = ADP + phosphate + H(+). Its function is as follows. The RuvA-RuvB-RuvC complex processes Holliday junction (HJ) DNA during genetic recombination and DNA repair, while the RuvA-RuvB complex plays an important role in the rescue of blocked DNA replication forks via replication fork reversal (RFR). RuvA specifically binds to HJ cruciform DNA, conferring on it an open structure. The RuvB hexamer acts as an ATP-dependent pump, pulling dsDNA into and through the RuvAB complex. RuvB forms 2 homohexamers on either side of HJ DNA bound by 1 or 2 RuvA tetramers; 4 subunits per hexamer contact DNA at a time. Coordinated motions by a converter formed by DNA-disengaged RuvB subunits stimulates ATP hydrolysis and nucleotide exchange. Immobilization of the converter enables RuvB to convert the ATP-contained energy into a lever motion, pulling 2 nucleotides of DNA out of the RuvA tetramer per ATP hydrolyzed, thus driving DNA branch migration. The RuvB motors rotate together with the DNA substrate, which together with the progressing nucleotide cycle form the mechanistic basis for DNA recombination by continuous HJ branch migration. Branch migration allows RuvC to scan DNA until it finds its consensus sequence, where it cleaves and resolves cruciform DNA. In Halalkalibacterium halodurans (strain ATCC BAA-125 / DSM 18197 / FERM 7344 / JCM 9153 / C-125) (Bacillus halodurans), this protein is Holliday junction branch migration complex subunit RuvB.